Here is a 173-residue protein sequence, read N- to C-terminus: Archaemetzincin (173 aa).

Residue H130 participates in Zn(2+) binding. The Proton acceptor role is filled by E131. The Zn(2+) site is built by H134, H140, C141, C146, C165, and C168.

This sequence belongs to the peptidase M54 family. As to quaternary structure, monomer. Zn(2+) serves as cofactor.

Functionally, probable zinc metalloprotease whose natural substrate is unknown. This Haloarcula marismortui (strain ATCC 43049 / DSM 3752 / JCM 8966 / VKM B-1809) (Halobacterium marismortui) protein is Archaemetzincin.